Consider the following 206-residue polypeptide: Large ribosomal subunit protein uL4 (206 aa).

The disordered stretch occupies residues 47 to 76 (GTQSAKTRAEVSGGGIKPWRQKGTGRARQG).

Belongs to the universal ribosomal protein uL4 family. Part of the 50S ribosomal subunit.

One of the primary rRNA binding proteins, this protein initially binds near the 5'-end of the 23S rRNA. It is important during the early stages of 50S assembly. It makes multiple contacts with different domains of the 23S rRNA in the assembled 50S subunit and ribosome. In terms of biological role, forms part of the polypeptide exit tunnel. This Clostridium botulinum (strain Okra / Type B1) protein is Large ribosomal subunit protein uL4.